An 85-amino-acid chain; its full sequence is Acyl carrier protein (85 aa).

Positions S2–A78 constitute a Carrier domain. At S37 the chain carries O-(pantetheine 4'-phosphoryl)serine.

Belongs to the acyl carrier protein (ACP) family. 4'-phosphopantetheine is transferred from CoA to a specific serine of apo-ACP by AcpS. This modification is essential for activity because fatty acids are bound in thioester linkage to the sulfhydryl of the prosthetic group.

Its subcellular location is the cytoplasm. Its pathway is lipid metabolism; fatty acid biosynthesis. Functionally, carrier of the growing fatty acid chain in fatty acid biosynthesis. In Azobacteroides pseudotrichonymphae genomovar. CFP2, this protein is Acyl carrier protein.